A 449-amino-acid chain; its full sequence is Glucose-6-phosphate isomerase (449 aa).

Catalysis depends on Glu291, which acts as the Proton donor. Catalysis depends on residues His312 and Lys426.

Belongs to the GPI family.

The protein localises to the cytoplasm. It catalyses the reaction alpha-D-glucose 6-phosphate = beta-D-fructose 6-phosphate. Its pathway is carbohydrate biosynthesis; gluconeogenesis. The protein operates within carbohydrate degradation; glycolysis; D-glyceraldehyde 3-phosphate and glycerone phosphate from D-glucose: step 2/4. Its function is as follows. Catalyzes the reversible isomerization of glucose-6-phosphate to fructose-6-phosphate. In Streptococcus pneumoniae (strain CGSP14), this protein is Glucose-6-phosphate isomerase.